The primary structure comprises 91 residues: Large ribosomal subunit protein uL22 (91 aa).

The protein belongs to the universal ribosomal protein uL22 family. In terms of assembly, part of the 50S ribosomal subunit.

In terms of biological role, this protein binds specifically to 23S rRNA; its binding is stimulated by other ribosomal proteins, e.g. L4, L17, and L20. It is important during the early stages of 50S assembly. It makes multiple contacts with different domains of the 23S rRNA in the assembled 50S subunit and ribosome. The globular domain of the protein is located near the polypeptide exit tunnel on the outside of the subunit, while an extended beta-hairpin is found that lines the wall of the exit tunnel in the center of the 70S ribosome. This is Large ribosomal subunit protein uL22 (rplV) from Ash yellows phytoplasma.